Here is a 356-residue protein sequence, read N- to C-terminus: L-lactate dehydrogenase A (356 aa).

NAD(+)-binding positions include 75–80 (DALPDK) and Arg-121. Arg-128, Asn-160, and Arg-191 together coordinate substrate. Asn-160 contacts NAD(+). Residue His-215 is the Proton acceptor of the active site. Thr-270 provides a ligand contact to substrate.

It belongs to the LDH/MDH superfamily. LDH family. In terms of assembly, tetramer that arise from random association of LDH-A and LDH-B.

The enzyme catalyses (S)-lactate + NAD(+) = pyruvate + NADH + H(+). Its pathway is fermentation; pyruvate fermentation to lactate; (S)-lactate from pyruvate: step 1/1. The chain is L-lactate dehydrogenase A from Hordeum vulgare (Barley).